The sequence spans 149 residues: Putative prefoldin subunit alpha (149 aa).

It belongs to the prefoldin subunit alpha family.

It localises to the cytoplasm. Its function is as follows. Molecular chaperone capable of stabilizing a range of proteins. This chain is Putative prefoldin subunit alpha, found in Aquifex aeolicus (strain VF5).